Here is a 189-residue protein sequence, read N- to C-terminus: Hypoxanthine/guanine phosphoribosyltransferase (189 aa).

It belongs to the purine/pyrimidine phosphoribosyltransferase family. Archaeal HPRT subfamily. As to quaternary structure, homodimer.

It is found in the cytoplasm. The catalysed reaction is IMP + diphosphate = hypoxanthine + 5-phospho-alpha-D-ribose 1-diphosphate. It carries out the reaction GMP + diphosphate = guanine + 5-phospho-alpha-D-ribose 1-diphosphate. It participates in purine metabolism; IMP biosynthesis via salvage pathway; IMP from hypoxanthine: step 1/1. Functionally, catalyzes a salvage reaction resulting in the formation of IMP that is energically less costly than de novo synthesis. This chain is Hypoxanthine/guanine phosphoribosyltransferase, found in Methanothrix soehngenii (strain ATCC 5969 / DSM 3671 / JCM 10134 / NBRC 103675 / OCM 69 / GP-6) (Methanosaeta concilii).